A 353-amino-acid chain; its full sequence is O-antigen chain mannosyltransferase RfbU (353 aa).

It belongs to the glycosyltransferase group 1 family. Glycosyltransferase 4 subfamily.

It carries out the reaction alpha-L-rhamnosyl-(1-&gt;3)-alpha-D-galactosyl-1-diphospho-di-trans,octa-cis-undecaprenol + GDP-alpha-D-mannose = alpha-D-Man-(1-&gt;4)-alpha-L-Rha-(1-&gt;3)-alpha-D-Gal-di-trans,octa-cis-undecaprenyl diphosphate + GDP + H(+). The protein operates within bacterial outer membrane biogenesis; LPS O-antigen biosynthesis. Its function is as follows. Mannosyltransferase involved in the biosynthesis of the repeat unit of the lipopolysaccharide (LPS) O-antigen region. Catalyzes the addition of a mannose to the rhamnosyl-galactosyl-undecaprenyl diphosphate intermediate. This Salmonella typhimurium (strain LT2 / SGSC1412 / ATCC 700720) protein is O-antigen chain mannosyltransferase RfbU.